A 193-amino-acid polypeptide reads, in one-letter code: Potassium-transporting ATPase KdpC subunit (193 aa).

The chain crosses the membrane as a helical span at residues 14–34; that stretch reads ITFTFLVLCGLVYPLIVTGIA.

Belongs to the KdpC family. In terms of assembly, the system is composed of three essential subunits: KdpA, KdpB and KdpC.

It is found in the cell membrane. Part of the high-affinity ATP-driven potassium transport (or Kdp) system, which catalyzes the hydrolysis of ATP coupled with the electrogenic transport of potassium into the cytoplasm. This subunit acts as a catalytic chaperone that increases the ATP-binding affinity of the ATP-hydrolyzing subunit KdpB by the formation of a transient KdpB/KdpC/ATP ternary complex. This chain is Potassium-transporting ATPase KdpC subunit, found in Bacillus cereus (strain B4264).